Reading from the N-terminus, the 631-residue chain is Sperm-associated antigen 16 protein (631 aa).

Residues 152–267 (DVYTQIMLLE…LQETLKKLQR (116 aa)) are a coiled coil. Residues 266 to 332 (QRGHSYHGPQ…QPNPNLNVSK (67 aa)) are disordered. 2 stretches are compositionally biased toward basic and acidic residues: residues 277 to 287 (KVDHSREKENA) and 295 to 304 (GLREAREQNK). 7 WD repeats span residues 350–389 (LHELPVSCVSMQPHKDILVSCGEDRLWKVLGLPKCNVLLT), 392–431 (GHTDWLSDCCFHPSGDKLATSSGDTTVKLWDLCKGDCILT), 434–473 (GHSRAVWSCTWHSCGNFVASSSLDKTSKIWDVNSERCRCT), 476–515 (GHTDSVNSIEFFPFSNTLLTSSADKTLSIWDARTGICEQS), 518–557 (GHMHSINDAIFDPRGHMIASCDACGVTKLWDFRKLLPIVS), 560–600 (IGPS…HKLM), and 601–630 (GHENEAHTVVFSHDGEILFSGGSDGTVRTW).

Interacts with SPAG6 and STK36. In terms of processing, phosphorylated by TSSK2. In terms of tissue distribution, isoform 1 is detected in testis. Isoform 4 is detected in testis and brain, and at lower levels in kidney, heart, pancreas, thyroid, ovary, adrenal gland, spinal cord, trachea and liver.

The protein resides in the cytoplasm. Its subcellular location is the cytoskeleton. The protein localises to the flagellum axoneme. It is found in the cilium axoneme. It localises to the cell projection. The protein resides in the cilium. Its subcellular location is the flagellum. In terms of biological role, necessary for sperm flagellar function. Plays a role in motile ciliogenesis. May help to recruit STK36 to the cilium or apical surface of the cell to initiate subsequent steps of construction of the central pair apparatus of motile cilia. This Homo sapiens (Human) protein is Sperm-associated antigen 16 protein (SPAG16).